We begin with the raw amino-acid sequence, 893 residues long: NEDD4-binding protein 1 (893 aa).

Residues 59 to 143 (QEAVHSAKEY…IQQFVKLFES (85 aa)) enclose the KH-like domain. The segment at 213-243 (EYTQSAATGPSSARDEVVVQEDSRNKARTPV) is disordered. The span at 214–223 (YTQSAATGPS) shows a compositional bias: polar residues. The segment covering 225-237 (ARDEVVVQEDSRN) has biased composition (basic and acidic residues). Thr-241 is subject to Phosphothreonine. Phosphoserine is present on residues Ser-257, Ser-269, and Ser-299. Disordered regions lie at residues 273 to 339 (DALS…DGKD), 394 to 433 (RDFP…QSHT), and 472 to 564 (IWGS…PPLP). Composition is skewed to polar residues over residues 405 to 433 (ASQS…QSHT) and 523 to 537 (GFQQ…NNTK). Over residues 551–564 (QPKPNYPPLSPPLP) the composition is skewed to pro residues. Ser-560 bears the Phosphoserine mark. One can recognise an RNase NYN domain in the interval 615 to 767 (LKHIVIDGSN…LGRNGPRLEE (153 aa)). Residues 793 to 820 (PGFRSPSTQVANNSHQPPPRIQTSSSPW) are disordered. Over residues 797–820 (SPSTQVANNSHQPPPRIQTSSSPW) the composition is skewed to polar residues. The coCUN stretch occupies residues 846-893 (RSSAETSELREALLKIFPDSEQKLKIDQILAAHPYMKDLNALSALVLD).

This sequence belongs to the N4BP1 family. In terms of assembly, interacts with NEDD4. Interacts with ITCH (via WW domain 2). Proteolytically cleaved by CASP8 downstream of TLR3 or TLR4, leading to its inactivation. Mainly cleaved at Asp-488 by CASP8. Cleaved by caspase-like protein MALT1, leading to its inactivation. Post-translationally, mono- and polyubiquitinated on the CoCUN region. Monoubiquitinated by NEDD4. Polyubiquitinated, leading to its degradation by the proteasome. Sumoylated with SUMO1, abrogating polyubiquitination and subsequent degradation. Desumoylated by SENP1, leading to accumulation in PML nuclear bodies.

The protein resides in the cytoplasm. It is found in the cytosol. The protein localises to the nucleus. Its subcellular location is the nucleolus. It localises to the PML body. With respect to regulation, proteolytic cleavage by CASP8 or MALT1 leads to its inactivation. Its function is as follows. Potent suppressor of cytokine production that acts as a regulator of innate immune signaling and inflammation. Acts as a key negative regulator of select cytokine and chemokine responses elicited by TRIF-independent Toll-like receptors (TLRs), thereby limiting inflammatory cytokine responses to minor insults. In response to more threatening pathogens, cleaved by CASP8 downstream of TLR3 or TLR4, leading to its inactivation, thereby allowing production of inflammatory cytokines. Acts as a restriction factor against some viruses: restricts viral replication by binding to mRNA viruses and mediating their degradation via its ribonuclease activity. Also acts as an inhibitor of the E3 ubiquitin-protein ligase ITCH: acts by interacting with the second WW domain of ITCH, leading to compete with ITCH's substrates and impairing ubiquitination of substrates. This Mus musculus (Mouse) protein is NEDD4-binding protein 1.